A 212-amino-acid chain; its full sequence is Hydroxyacylglutathione hydrolase GloC (212 aa).

The Zn(2+) site is built by His55, His57, Asp59, His60, His132, Asp151, and His192.

It belongs to the metallo-beta-lactamase superfamily. Glyoxalase II family. Zn(2+) is required as a cofactor.

The enzyme catalyses an S-(2-hydroxyacyl)glutathione + H2O = a 2-hydroxy carboxylate + glutathione + H(+). It catalyses the reaction (R)-S-lactoylglutathione + H2O = (R)-lactate + glutathione + H(+). It participates in secondary metabolite metabolism; methylglyoxal degradation; (R)-lactate from methylglyoxal: step 2/2. Its function is as follows. Type II glyoxalase, isozyme of GloB, that hydrolyzes (R)-S-lactoylglutathione to (R)-lactate and glutathione. Plays a role in methylglyoxal (MG) detoxification. This chain is Hydroxyacylglutathione hydrolase GloC, found in Haemophilus influenzae (strain ATCC 51907 / DSM 11121 / KW20 / Rd).